Here is a 166-residue protein sequence, read N- to C-terminus: Protein FAM89A (166 aa).

It belongs to the FAM89 family.

In Xenopus laevis (African clawed frog), this protein is Protein FAM89A (fam89a).